Reading from the N-terminus, the 246-residue chain is Bis(5'-nucleosyl)-tetraphosphatase PrpE [asymmetrical] (246 aa).

The protein belongs to the PrpE family. Ni(2+) serves as cofactor.

The enzyme catalyses P(1),P(4)-bis(5'-guanosyl) tetraphosphate + H2O = GMP + GTP + 2 H(+). Functionally, asymmetrically hydrolyzes Ap4p to yield AMP and ATP. The chain is Bis(5'-nucleosyl)-tetraphosphatase PrpE [asymmetrical] from Bacillus cereus (strain 03BB102).